The primary structure comprises 307 residues: 4-hydroxybenzoate octaprenyltransferase (307 aa).

9 helical membrane-spanning segments follow: residues 19-39 (PVGI…AAMG), 48-68 (VTAG…AILM), 105-125 (AIAA…FLPI), 127-147 (VFYW…MKRY), 150-170 (LPQV…YVAI), 172-192 (GAAD…TVAY), 221-241 (VIII…VMWH), 243-263 (FVPT…AMMF), and 282-302 (FLAN…ACVW).

The protein belongs to the UbiA prenyltransferase family. Requires Mg(2+) as cofactor.

It is found in the cell inner membrane. The catalysed reaction is all-trans-octaprenyl diphosphate + 4-hydroxybenzoate = 4-hydroxy-3-(all-trans-octaprenyl)benzoate + diphosphate. It functions in the pathway cofactor biosynthesis; ubiquinone biosynthesis. In terms of biological role, catalyzes the prenylation of para-hydroxybenzoate (PHB) with an all-trans polyprenyl group. Mediates the second step in the final reaction sequence of ubiquinone-8 (UQ-8) biosynthesis, which is the condensation of the polyisoprenoid side chain with PHB, generating the first membrane-bound Q intermediate 3-octaprenyl-4-hydroxybenzoate. The chain is 4-hydroxybenzoate octaprenyltransferase from Psychrobacter arcticus (strain DSM 17307 / VKM B-2377 / 273-4).